The sequence spans 635 residues: 1-deoxy-D-xylulose-5-phosphate synthase (635 aa).

Residues His-79 and Gly-120–Ser-122 each bind thiamine diphosphate. Residue Asp-151 coordinates Mg(2+). Residues Gly-152–Ala-153, Asn-182, Tyr-291, and Glu-372 each bind thiamine diphosphate. Asn-182 contacts Mg(2+).

The protein belongs to the transketolase family. DXPS subfamily. Homodimer. Requires Mg(2+) as cofactor. Thiamine diphosphate is required as a cofactor.

The catalysed reaction is D-glyceraldehyde 3-phosphate + pyruvate + H(+) = 1-deoxy-D-xylulose 5-phosphate + CO2. Its pathway is metabolic intermediate biosynthesis; 1-deoxy-D-xylulose 5-phosphate biosynthesis; 1-deoxy-D-xylulose 5-phosphate from D-glyceraldehyde 3-phosphate and pyruvate: step 1/1. In terms of biological role, catalyzes the acyloin condensation reaction between C atoms 2 and 3 of pyruvate and glyceraldehyde 3-phosphate to yield 1-deoxy-D-xylulose-5-phosphate (DXP). The protein is 1-deoxy-D-xylulose-5-phosphate synthase of Xylella fastidiosa (strain M23).